The primary structure comprises 408 residues: Na(+)-translocating NADH-quinone reductase subunit F (408 aa).

The helical transmembrane segment at 4–24 (VYLGVGMFTAIVLVLVLVILF) threads the bilayer. The 2Fe-2S ferredoxin-type domain occupies 33–127 (GDIIIGINGD…DMEIELDEEI (95 aa)). [2Fe-2S] cluster contacts are provided by Cys70, Cys76, Cys79, and Cys111. The region spanning 130-270 (IKKWECDVIS…SGPFGEFFAK (141 aa)) is the FAD-binding FR-type domain.

It belongs to the NqrF family. In terms of assembly, composed of six subunits; NqrA, NqrB, NqrC, NqrD, NqrE and NqrF. It depends on [2Fe-2S] cluster as a cofactor. FAD serves as cofactor.

It localises to the cell inner membrane. It carries out the reaction a ubiquinone + n Na(+)(in) + NADH + H(+) = a ubiquinol + n Na(+)(out) + NAD(+). NQR complex catalyzes the reduction of ubiquinone-1 to ubiquinol by two successive reactions, coupled with the transport of Na(+) ions from the cytoplasm to the periplasm. The first step is catalyzed by NqrF, which accepts electrons from NADH and reduces ubiquinone-1 to ubisemiquinone by a one-electron transfer pathway. This Shewanella denitrificans (strain OS217 / ATCC BAA-1090 / DSM 15013) protein is Na(+)-translocating NADH-quinone reductase subunit F.